The primary structure comprises 365 residues: MPKPAIKTAAKPATSPAGKRAKPNTPQSVAKLKASTAKAASKPKAKLGEKKTLHPRNVHLHGYDFVALMASFPKLKAFVRPTAYGALSIDFADPLAVKNLNAALLKQHYQIDFWDIPKGALCPPIPGRVDYVHYLADLLFEGATAPRVEQVCALDIGTGANGIYAILGQQVYGWQFVASDINPQSLANVQRIIDNNSCLQGHVTLRRQRDENAIFKGIIEAADRFELTLCNPPFHASLREASEGSQRKVRNLQLSRGEKPKATGASLNFGGQAAELWCQGGEKQFLATMIRESHMFAEQCLWFTSLVSKQENLKPCYQALAKLGVDTVKTIEMQQGNKVTRVLAWSFHSQAKRLRWRSELVTPTE.

Low complexity-rich tracts occupy residues 1 to 18 and 30 to 42; these read MPKP…SPAG and AKLK…AASK. The segment at 1 to 50 is disordered; the sequence is MPKPAIKTAAKPATSPAGKRAKPNTPQSVAKLKASTAKAASKPKAKLGEK.

Belongs to the methyltransferase superfamily. METTL16/RlmF family.

The protein localises to the cytoplasm. The catalysed reaction is adenosine(1618) in 23S rRNA + S-adenosyl-L-methionine = N(6)-methyladenosine(1618) in 23S rRNA + S-adenosyl-L-homocysteine + H(+). Specifically methylates the adenine in position 1618 of 23S rRNA. This chain is Ribosomal RNA large subunit methyltransferase F, found in Shewanella oneidensis (strain ATCC 700550 / JCM 31522 / CIP 106686 / LMG 19005 / NCIMB 14063 / MR-1).